A 244-amino-acid polypeptide reads, in one-letter code: 5-oxoprolinase subunit A (244 aa).

This sequence belongs to the LamB/PxpA family. As to quaternary structure, forms a complex composed of PxpA, PxpB and PxpC.

The catalysed reaction is 5-oxo-L-proline + ATP + 2 H2O = L-glutamate + ADP + phosphate + H(+). Its function is as follows. Catalyzes the cleavage of 5-oxoproline to form L-glutamate coupled to the hydrolysis of ATP to ADP and inorganic phosphate. This Shigella dysenteriae serotype 1 (strain Sd197) protein is 5-oxoprolinase subunit A.